A 360-amino-acid polypeptide reads, in one-letter code: Holliday junction branch migration complex subunit RuvB (360 aa).

The tract at residues 1–23 is disordered; it reads MIASVGDSRYYPKSVANGEKSDQ. The interval 12-204 is large ATPase domain (RuvB-L); the sequence is PKSVANGEKS…FGIVLRLEFY (193 aa). ATP-binding positions include Leu-43, Arg-44, Gly-85, Lys-88, Thr-89, Thr-90, 151 to 153, Arg-194, Tyr-204, and Arg-241; that span reads EDY. Residue Thr-89 participates in Mg(2+) binding. Residues 205–275 are small ATPAse domain (RuvB-S); that stretch reads TTEDLKIILK…TAQKALEMLE (71 aa). Positions 278–360 are head domain (RuvB-H); sequence QHGFDEVDRR…KPPKKQDSLF (83 aa). DNA is bound by residues Arg-333 and Arg-338.

This sequence belongs to the RuvB family. In terms of assembly, homohexamer. Forms an RuvA(8)-RuvB(12)-Holliday junction (HJ) complex. HJ DNA is sandwiched between 2 RuvA tetramers; dsDNA enters through RuvA and exits via RuvB. An RuvB hexamer assembles on each DNA strand where it exits the tetramer. Each RuvB hexamer is contacted by two RuvA subunits (via domain III) on 2 adjacent RuvB subunits; this complex drives branch migration. In the full resolvosome a probable DNA-RuvA(4)-RuvB(12)-RuvC(2) complex forms which resolves the HJ.

The protein resides in the cytoplasm. It carries out the reaction ATP + H2O = ADP + phosphate + H(+). The RuvA-RuvB-RuvC complex processes Holliday junction (HJ) DNA during genetic recombination and DNA repair, while the RuvA-RuvB complex plays an important role in the rescue of blocked DNA replication forks via replication fork reversal (RFR). RuvA specifically binds to HJ cruciform DNA, conferring on it an open structure. The RuvB hexamer acts as an ATP-dependent pump, pulling dsDNA into and through the RuvAB complex. RuvB forms 2 homohexamers on either side of HJ DNA bound by 1 or 2 RuvA tetramers; 4 subunits per hexamer contact DNA at a time. Coordinated motions by a converter formed by DNA-disengaged RuvB subunits stimulates ATP hydrolysis and nucleotide exchange. Immobilization of the converter enables RuvB to convert the ATP-contained energy into a lever motion, pulling 2 nucleotides of DNA out of the RuvA tetramer per ATP hydrolyzed, thus driving DNA branch migration. The RuvB motors rotate together with the DNA substrate, which together with the progressing nucleotide cycle form the mechanistic basis for DNA recombination by continuous HJ branch migration. Branch migration allows RuvC to scan DNA until it finds its consensus sequence, where it cleaves and resolves cruciform DNA. This is Holliday junction branch migration complex subunit RuvB from Koribacter versatilis (strain Ellin345).